We begin with the raw amino-acid sequence, 276 residues long: Lyso-ornithine lipid O-acyltransferase (276 aa).

The chain crosses the membrane as a helical span at residues 25–47 (LALRGGAMALVLMAGLTLHLAVR).

Belongs to the 1-acyl-sn-glycerol-3-phosphate acyltransferase family. OlsA subfamily.

It is found in the membrane. The catalysed reaction is a lyso-ornithine lipid + a fatty acyl-[ACP] = an N(2)-[(3R)-3-(acyloxy)acyl]-L-ornithine lipid + holo-[ACP]. It catalyses the reaction a fatty acyl-[ACP] + a 1-acyl-sn-glycero-3-phosphate = a 1,2-diacyl-sn-glycero-3-phosphate + holo-[ACP]. It functions in the pathway lipid metabolism. Its pathway is phospholipid metabolism. In terms of biological role, catalyzes the second step in the formation of ornithine lipids, which are phosphorus-free membrane lipids. Uses acyl-acyl carrier protein (acyl-AcpP) as an acyl donor and converts lyso-ornithine lipid (LOL) into ornithine lipid (OL). It can also act as an alternate acyl-sn-glycerol-3-phosphate acyltransferase (AGPAT) to ensure glycerophospholipid production. The chain is Lyso-ornithine lipid O-acyltransferase from Rhodobacter capsulatus (strain ATCC BAA-309 / NBRC 16581 / SB1003).